The chain runs to 83 residues: UPF0248 protein PH1212.1 (83 aa).

It belongs to the UPF0248 family.

This is UPF0248 protein PH1212.1 from Pyrococcus horikoshii (strain ATCC 700860 / DSM 12428 / JCM 9974 / NBRC 100139 / OT-3).